We begin with the raw amino-acid sequence, 287 residues long: ATP synthase gamma chain (287 aa).

This sequence belongs to the ATPase gamma chain family. F-type ATPases have 2 components, CF(1) - the catalytic core - and CF(0) - the membrane proton channel. CF(1) has five subunits: alpha(3), beta(3), gamma(1), delta(1), epsilon(1). CF(0) has three main subunits: a, b and c.

It localises to the cell inner membrane. In terms of biological role, produces ATP from ADP in the presence of a proton gradient across the membrane. The gamma chain is believed to be important in regulating ATPase activity and the flow of protons through the CF(0) complex. The protein is ATP synthase gamma chain of Proteus mirabilis (strain HI4320).